The chain runs to 142 residues: Baculoviral IAP repeat-containing protein 5 (142 aa).

The stretch at 18–88 (RISTFKNWPF…KHSSGCAFLS (71 aa)) is one BIR repeat. Residue Ser-20 is modified to Phosphoserine; by AURKC. An N6-acetyllysine modification is found at Lys-23. Thr-34 carries the phosphothreonine; by CDK1 and CDK15 modification. Phosphothreonine is present on Thr-48. Zn(2+) contacts are provided by Cys-57, Cys-60, His-77, and Cys-84. Lys-90, Lys-110, Lys-112, and Lys-115 each carry N6-acetyllysine. Thr-117 is modified (phosphothreonine; by AURKB). Lys-129 is subject to N6-acetyllysine.

This sequence belongs to the IAP family. In terms of assembly, monomer or homodimer. Exists as a homodimer in the apo state and as a monomer in the CPC-bound state. The monomer protects cells against apoptosis more efficiently than the dimer. Only the dimeric form is capable of enhancing tubulin stability in cells. When phosphorylated, interacts with LAMTOR5/HBXIP; the resulting complex binds pro-CASP9, as well as active CASP9, but much less efficiently. Component of the chromosomal passenger complex (CPC) composed of at least BIRC5/survivin, CDCA8/borealin, INCENP, AURKB or AURKC; in the complex forms a triple-helix bundle-based subcomplex with INCENP and CDCA8. Interacts with JTB. Interacts (via BIR domain) with histone H3 phosphorylated at 'Thr-3' (H3pT3). Interacts with EVI5. Interacts with GTP-bound RAN in both the S and M phases of the cell cycle. Interacts with USP9X. Interacts with tubulin. Interacts with BIRC2/c-IAP1. The acetylated form at Lys-129 interacts with STAT3. The monomeric form deacetylated at Lys-129 interacts with XPO1/CRM1. The monomeric form interacts with XIAP/BIRC4. Both the dimeric and monomeric form can interact with DIABLO/SMAC. Interacts with BIRC6/bruce. Interacts with FBXL7; this interaction facilitates the polyubiquitination and subsequent proteasomal degradation of BIRC5 by the SCF(FBXL7) E3 ubiquitin-protein ligase complex. Post-translationally, ubiquitinated by the Cul9-RING ubiquitin-protein ligase complex, leading to its degradation. Ubiquitination is required for centrosomal targeting. Deubiquitinated by USP35 or USP38; leading to stabilization. In terms of processing, acetylation at Lys-129 results in its homodimerization, while deacetylation promotes the formation of monomers which heterodimerize with XPO1/CRM1 which facilitates its nuclear export. The acetylated form represses STAT3 transactivation. The dynamic equilibrium between its acetylation and deacetylation at Lys-129 determines its interaction with XPO1/CRM1, its subsequent subcellular localization, and its ability to inhibit STAT3 transactivation. In vitro phosphorylation at Thr-117 by AURKB prevents interaction with INCENP and localization to mitotic chromosomes. Phosphorylation at Thr-48 by CK2 is critical for its mitotic and anti-apoptotic activities. Phosphorylation at Thr-34 by CDK15 is critical for its anti-apoptotic activity. Phosphorylation at Ser-20 by AURKC is critical for regulation of proper chromosome alignment and segregation, and possibly cytokinesis.

The protein resides in the cytoplasm. The protein localises to the nucleus. It is found in the chromosome. It localises to the centromere. Its subcellular location is the cytoskeleton. The protein resides in the spindle. The protein localises to the kinetochore. It is found in the midbody. In terms of biological role, multitasking protein that has dual roles in promoting cell proliferation and preventing apoptosis. Component of a chromosome passage protein complex (CPC) which is essential for chromosome alignment and segregation during mitosis and cytokinesis. Acts as an important regulator of the localization of this complex; directs CPC movement to different locations from the inner centromere during prometaphase to midbody during cytokinesis and participates in the organization of the center spindle by associating with polymerized microtubules. Involved in the recruitment of CPC to centromeres during early mitosis via association with histone H3 phosphorylated at 'Thr-3' (H3pT3) during mitosis. The complex with RAN plays a role in mitotic spindle formation by serving as a physical scaffold to help deliver the RAN effector molecule TPX2 to microtubules. May counteract a default induction of apoptosis in G2/M phase. The acetylated form represses STAT3 transactivation of target gene promoters. May play a role in neoplasia. Inhibitor of CASP3 and CASP7. Essential for the maintenance of mitochondrial integrity and function. The chain is Baculoviral IAP repeat-containing protein 5 (BIRC5) from Pongo abelii (Sumatran orangutan).